Consider the following 161-residue polypeptide: Ferredoxin/F(420)H(2)-dependent CoB-CoM heterodisulfide reductase subunit C (161 aa).

4Fe-4S ferredoxin-type domains are found at residues Lys-10 to Arg-40 and Ala-51 to Ile-82. [4Fe-4S] cluster-binding residues include Cys-19, Cys-22, Cys-25, Cys-29, Cys-62, Cys-65, Cys-68, and Cys-72.

The protein belongs to the HdrC family. In terms of assembly, the ferredoxin/F(420)H(2)-dependent CoB-CoM heterodisulfide reductase is composed of three subunits; HdrA2, HdrB2 and HdrC2. It depends on [4Fe-4S] cluster as a cofactor.

The protein resides in the cytoplasm. The enzyme catalyses coenzyme B + coenzyme M + 2 oxidized [2Fe-2S]-[ferredoxin] = coenzyme M-coenzyme B heterodisulfide + 2 reduced [2Fe-2S]-[ferredoxin] + 2 H(+). It carries out the reaction coenzyme B + 2 oxidized coenzyme F420-(gamma-L-Glu)(n) + coenzyme M + 2 reduced [2Fe-2S]-[ferredoxin] + 4 H(+) = coenzyme M-coenzyme B heterodisulfide + 2 reduced coenzyme F420-(gamma-L-Glu)(n) + 2 oxidized [2Fe-2S]-[ferredoxin]. It functions in the pathway cofactor metabolism; coenzyme M-coenzyme B heterodisulfide reduction; coenzyme B and coenzyme M from coenzyme M-coenzyme B heterodisulfide: step 1/1. Part of a complex that catalyzes the reversible reduction of CoM-S-S-CoB to the thiol-coenzymes H-S-CoM (coenzyme M) and H-S-CoB (coenzyme B). Catalyzes the transfer of electrons from ferredoxin to CoM-S-S-CoB during methanogenesis from acetate. Electrons transfer from ferredoxin to CoM-S-S-CoB via HdrA2, HdrC2 and HdrB2. In addition, the complex can use electron bifurcation to direct electron pairs from reduced coenzyme F420 towards the reduction of both ferredoxin and CoB-CoM heterodisulfide. This activity may take place during Fe(III)-dependent anaerobic methane oxidation. The chain is Ferredoxin/F(420)H(2)-dependent CoB-CoM heterodisulfide reductase subunit C from Methanosarcina acetivorans (strain ATCC 35395 / DSM 2834 / JCM 12185 / C2A).